A 418-amino-acid polypeptide reads, in one-letter code: Tyrosine--tRNA ligase (418 aa).

Tyr34 lines the L-tyrosine pocket. The short motif at 39–48 (PTADSLHLGH) is the 'HIGH' region element. Residues Tyr169 and Gln173 each coordinate L-tyrosine. Positions 229–233 (KFGKS) match the 'KMSKS' region motif. ATP is bound at residue Lys232. The S4 RNA-binding domain maps to 352-418 (NNIVELLVSS…GKKKYFVLTY (67 aa)).

Belongs to the class-I aminoacyl-tRNA synthetase family. TyrS type 1 subfamily. As to quaternary structure, homodimer.

The protein localises to the cytoplasm. It catalyses the reaction tRNA(Tyr) + L-tyrosine + ATP = L-tyrosyl-tRNA(Tyr) + AMP + diphosphate + H(+). Its function is as follows. Catalyzes the attachment of tyrosine to tRNA(Tyr) in a two-step reaction: tyrosine is first activated by ATP to form Tyr-AMP and then transferred to the acceptor end of tRNA(Tyr). In Streptococcus pneumoniae (strain ATCC BAA-255 / R6), this protein is Tyrosine--tRNA ligase.